The primary structure comprises 434 residues: Forkhead box protein A2 (434 aa).

A DNA-binding region (fork-head) is located at residues lysine 149–lysine 243. Over residues lysine 249–serine 262 the composition is skewed to basic and acidic residues. A disordered region spans residues lysine 249–leucine 339. Low complexity-rich tracts occupy residues glutamate 263 to proline 291 and alanine 317 to histidine 333.

It is found in the nucleus. In terms of biological role, acts as a transcriptional activator during early development, limiting the extent of mesoderm formation in the gastrula. Binds to DNA via the target sequence 5'-GT[AC]AACA-3', with 5'-GTAAACA-3' being the preferred binding site. The chain is Forkhead box protein A2 from Xenopus tropicalis (Western clawed frog).